Reading from the N-terminus, the 433-residue chain is Nuclear hormone receptor family member nhr-98 (433 aa).

The segment at residues 41-116 (SKKCQICENP…FGMTIDNFQF (76 aa)) is a DNA-binding region (nuclear receptor). NR C4-type zinc fingers lie at residues 44–64 (CQICENPAHGKHFGAVTCRAC) and 80–104 (CKTENKCSFRKNGYFSCKKCRMQRC). Positions 177 to 433 (ETPYQVSNVL…CSHPGIFLNA (257 aa)) constitute an NR LBD domain.

Belongs to the nuclear hormone receptor family.

Its subcellular location is the nucleus. Functionally, orphan nuclear receptor. The sequence is that of Nuclear hormone receptor family member nhr-98 (nhr-98) from Caenorhabditis elegans.